Consider the following 1176-residue polypeptide: Surface-layer 125 kDa protein (1176 aa).

An N-terminal signal peptide occupies residues 1-30 (MAKQNKGRKFFAASATAALVASAIVPVASA). SLH domains are found at residues 31–88 (AQLN…LEAE), 89–152 (GDVN…DLSE), and 153–216 (FADA…PKVD).

It is found in the secreted. The protein resides in the cell wall. It localises to the S-layer. In terms of biological role, the S-layer is a paracrystalline mono-layered assembly of proteins which coat the surface of bacteria. In Lysinibacillus sphaericus (Bacillus sphaericus), this protein is Surface-layer 125 kDa protein.